The following is a 206-amino-acid chain: Pyridoxine/pyridoxamine 5'-phosphate oxidase (206 aa).

Residues 49 to 54 (RMVLLK), 69 to 70 (YT), Lys76, and Gln98 each bind FMN. A substrate-binding site is contributed by Lys54. Residues Tyr116, Arg120, and Ser124 each coordinate substrate. FMN-binding positions include 133 to 134 (QS) and Trp177. Substrate is bound at residue 183–185 (RLH). Arg187 contributes to the FMN binding site.

It belongs to the pyridoxamine 5'-phosphate oxidase family. Homodimer. FMN serves as cofactor.

It catalyses the reaction pyridoxamine 5'-phosphate + O2 + H2O = pyridoxal 5'-phosphate + H2O2 + NH4(+). The enzyme catalyses pyridoxine 5'-phosphate + O2 = pyridoxal 5'-phosphate + H2O2. The protein operates within cofactor metabolism; pyridoxal 5'-phosphate salvage; pyridoxal 5'-phosphate from pyridoxamine 5'-phosphate: step 1/1. It participates in cofactor metabolism; pyridoxal 5'-phosphate salvage; pyridoxal 5'-phosphate from pyridoxine 5'-phosphate: step 1/1. Catalyzes the oxidation of either pyridoxine 5'-phosphate (PNP) or pyridoxamine 5'-phosphate (PMP) into pyridoxal 5'-phosphate (PLP). This chain is Pyridoxine/pyridoxamine 5'-phosphate oxidase, found in Jannaschia sp. (strain CCS1).